We begin with the raw amino-acid sequence, 74 residues long: MNATIFAFLLLLNLAMHNATEQSSETDMDDTLLIPEINRGRCIEEGKWCPKKAPCCGRLECKGPSPKQKKCTRP.

The signal sequence occupies residues 1-19 (MNATIFAFLLLLNLAMHNA). Residues 20–39 (TEQSSETDMDDTLLIPEINR) constitute a propeptide that is removed on maturation. 3 disulfide bridges follow: C42-C56, C49-C61, and C55-C71.

It belongs to the neurotoxin 36 family. 01 subfamily. Expressed by the venom gland.

It is found in the secreted. Its function is as follows. Probable ion channel inhibitor. The sequence is that of U4-theraphotoxin-Cg1a from Chilobrachys guangxiensis (Chinese earth tiger tarantula).